The following is a 292-amino-acid chain: Homoserine kinase (292 aa).

An ATP-binding site is contributed by 84–94 (PLSRGLGSSSA).

This sequence belongs to the GHMP kinase family. Homoserine kinase subfamily.

The protein localises to the cytoplasm. It carries out the reaction L-homoserine + ATP = O-phospho-L-homoserine + ADP + H(+). It participates in amino-acid biosynthesis; L-threonine biosynthesis; L-threonine from L-aspartate: step 4/5. In terms of biological role, catalyzes the ATP-dependent phosphorylation of L-homoserine to L-homoserine phosphate. The protein is Homoserine kinase of Campylobacter jejuni subsp. jejuni serotype O:6 (strain 81116 / NCTC 11828).